The following is a 379-amino-acid chain: MSEFLPFSRPAMGVEELAAVKEVLESGWITTGPKNQALEQAFCQLTGNQHAIAVSSATAGMHITLMALEIGKGDEVITPSLTWVSTLNMISLLGATPVMVDVDRDTLMVTPEAIESAITPRTKAIIPVHYAGAPADIDAIRAIGERYGIAVIEDAAHAVGTYYKGRHIGAKGTAIFSFHAIKNITCAEGGLIVTDNENLARQLRMLKFHGLGVDAYDRQTWGRAPQAEVLTPGYKYNLTDINAAIALTQLAKLEHLNTRRREIAQQYQQALAALPFQPLSLPAWPHVHAWHLFIIRVDEQRCGISRDALMEALKERGIGTGLHFRAAHTQKYYRERFPTLSLPNTEWNSERICSLPLFPDMTTADADRVITALQQLAGQ.

Lys182 is modified (N6-(pyridoxal phosphate)lysine).

Belongs to the DegT/DnrJ/EryC1 family. ArnB subfamily. As to quaternary structure, homodimer. Pyridoxal 5'-phosphate is required as a cofactor.

It catalyses the reaction UDP-4-amino-4-deoxy-beta-L-arabinose + 2-oxoglutarate = UDP-beta-L-threo-pentopyranos-4-ulose + L-glutamate. It functions in the pathway nucleotide-sugar biosynthesis; UDP-4-deoxy-4-formamido-beta-L-arabinose biosynthesis; UDP-4-deoxy-4-formamido-beta-L-arabinose from UDP-alpha-D-glucuronate: step 2/3. Its pathway is bacterial outer membrane biogenesis; lipopolysaccharide biosynthesis. Its function is as follows. Catalyzes the conversion of UDP-4-keto-arabinose (UDP-Ara4O) to UDP-4-amino-4-deoxy-L-arabinose (UDP-L-Ara4N). The modified arabinose is attached to lipid A and is required for resistance to polymyxin and cationic antimicrobial peptides. In Shigella boydii serotype 4 (strain Sb227), this protein is UDP-4-amino-4-deoxy-L-arabinose--oxoglutarate aminotransferase.